A 315-amino-acid chain; its full sequence is Porphobilinogen deaminase (315 aa).

Cysteine 242 bears the S-(dipyrrolylmethanemethyl)cysteine mark.

It belongs to the HMBS family. As to quaternary structure, monomer. Requires dipyrromethane as cofactor.

The enzyme catalyses 4 porphobilinogen + H2O = hydroxymethylbilane + 4 NH4(+). It functions in the pathway porphyrin-containing compound metabolism; protoporphyrin-IX biosynthesis; coproporphyrinogen-III from 5-aminolevulinate: step 2/4. In terms of biological role, tetrapolymerization of the monopyrrole PBG into the hydroxymethylbilane pre-uroporphyrinogen in several discrete steps. This chain is Porphobilinogen deaminase, found in Syntrophotalea carbinolica (strain DSM 2380 / NBRC 103641 / GraBd1) (Pelobacter carbinolicus).